A 250-amino-acid polypeptide reads, in one-letter code: Maleate isomerase (250 aa).

Residues asparagine 15, 80–82, tyrosine 137, and asparagine 167 contribute to the substrate site; that span reads CLV. Cysteine 80 (nucleophile) is an active-site residue. At cysteine 80 the chain carries S-(2-succinyl)cysteine. Cysteine 198 serves as the catalytic Proton donor. 199–200 is a binding site for substrate; it reads VQ.

This sequence belongs to the maleate isomerase family. As to quaternary structure, homodimer.

It carries out the reaction maleate = fumarate. Its pathway is cofactor degradation; nicotinate degradation. Its function is as follows. Catalyzes cis-trans isomerization of the C2-C3 double bond in maleate to yield fumarate in the aerobic nicotinate degradation pathway. This Pseudomonas putida (strain ATCC 47054 / DSM 6125 / CFBP 8728 / NCIMB 11950 / KT2440) protein is Maleate isomerase.